A 308-amino-acid polypeptide reads, in one-letter code: Neurexophilin-4 (308 aa).

The first 23 residues, methionine 1–alanine 23, serve as a signal peptide directing secretion. Residues glutamine 24–glycine 84 are II. Residues alanine 40–proline 51 show a composition bias toward low complexity. Positions alanine 40 to leucine 59 are disordered. Asparagine 72, asparagine 133, asparagine 143, and asparagine 149 each carry an N-linked (GlcNAc...) asparagine glycan. An III region spans residues alanine 85–phenylalanine 163. The segment at glycine 164–glycine 224 is IV (linker domain). Residues alanine 225 to glycine 308 are v (Cys-rich).

The protein belongs to the neurexophilin family. May be proteolytically processed at the boundary between the N-terminal non-conserved and the central conserved domain in neuron-like cells. Expressed in brain, spleen, and testis.

The protein localises to the secreted. Functionally, may be signaling molecules that resemble neuropeptides and that act by binding to alpha-neurexins and possibly other receptors. The chain is Neurexophilin-4 (NXPH4) from Homo sapiens (Human).